The following is a 500-amino-acid chain: Probable cytosol aminopeptidase (500 aa).

Mn(2+) contacts are provided by Lys267 and Asp272. Lys279 is a catalytic residue. Residues Asp290, Asp349, and Glu351 each contribute to the Mn(2+) site. Arg353 is an active-site residue.

It belongs to the peptidase M17 family. The cofactor is Mn(2+).

It localises to the cytoplasm. It carries out the reaction Release of an N-terminal amino acid, Xaa-|-Yaa-, in which Xaa is preferably Leu, but may be other amino acids including Pro although not Arg or Lys, and Yaa may be Pro. Amino acid amides and methyl esters are also readily hydrolyzed, but rates on arylamides are exceedingly low.. The catalysed reaction is Release of an N-terminal amino acid, preferentially leucine, but not glutamic or aspartic acids.. Its function is as follows. Presumably involved in the processing and regular turnover of intracellular proteins. Catalyzes the removal of unsubstituted N-terminal amino acids from various peptides. The sequence is that of Probable cytosol aminopeptidase from Tolumonas auensis (strain DSM 9187 / NBRC 110442 / TA 4).